The following is a 212-amino-acid chain: Sentrin-specific protease 8 (212 aa).

At M1 the chain carries N-acetylmethionine. The protease stretch occupies residues 11–174 (SLLRQSDVSL…MYVICNTEAL (164 aa)). Active-site residues include H102 and D119. C163 (nucleophile) is an active-site residue.

Belongs to the peptidase C48 family. In terms of tissue distribution, broadly expressed, with highest levels in kidney and pancreas.

In terms of biological role, protease that catalyzes two essential functions in the NEDD8 pathway: processing of full-length NEDD8 to its mature form and deconjugation of NEDD8 from targeted proteins such as cullins or p53. This Homo sapiens (Human) protein is Sentrin-specific protease 8 (SENP8).